Here is a 669-residue protein sequence, read N- to C-terminus: DNA mismatch repair protein MutL (669 aa).

Residues 356–377 form a disordered region; it reads FEQRQNTENNQEKTFSSEESNS. Positions 361–377 are enriched in polar residues; it reads NTENNQEKTFSSEESNS.

The protein belongs to the DNA mismatch repair MutL/HexB family.

Its function is as follows. This protein is involved in the repair of mismatches in DNA. It is required for dam-dependent methyl-directed DNA mismatch repair. May act as a 'molecular matchmaker', a protein that promotes the formation of a stable complex between two or more DNA-binding proteins in an ATP-dependent manner without itself being part of a final effector complex. The polypeptide is DNA mismatch repair protein MutL (Staphylococcus aureus (strain MSSA476)).